Reading from the N-terminus, the 113-residue chain is Mitochondrial import inner membrane translocase subunit TIM14 (113 aa).

The Mitochondrial intermembrane portion of the chain corresponds to 1 to 4; sequence MATP. A helical membrane pass occupies residues 5 to 22; that stretch reads IIVGATIAGIAYSSRFLI. Topologically, residues 23–113 are mitochondrial matrix; it reads RVIQRAKSKQ…RNVLSSKNSN (91 aa). A J domain is found at 59–113; it reads EAANILGLKEESTKEEIKIRHKLLMIKNHPDKGGSSYLATKINEARNVLSSKNSN.

The protein belongs to the TIM14 family. In terms of assembly, interacts with PHB2; the interaction associates DNAJC19 with the prohibitin complex. Interacts with TIMM16/PAM16. May be a component of the PAM complex at least composed of a mitochondrial HSP70 protein, GRPEL1 or GRPEL2, TIMM44, TIMM16/PAM16 and TIMM14/DNAJC19.

The protein localises to the mitochondrion inner membrane. Mitochondrial co-chaperone which forms a complex with prohibitins to regulate cardiolipin remodeling. May be a component of the PAM complex, a complex required for the translocation of transit peptide-containing proteins from the inner membrane into the mitochondrial matrix in an ATP-dependent manner. May act as a co-chaperone that stimulate the ATP-dependent activity. In Dictyostelium discoideum (Social amoeba), this protein is Mitochondrial import inner membrane translocase subunit TIM14 (dnajc19).